The following is a 204-amino-acid chain: Ciliary microtubule inner protein 7 (204 aa).

The protein localises to the cell projection. It localises to the cilium. This Homo sapiens (Human) protein is Ciliary microtubule inner protein 7.